A 565-amino-acid chain; its full sequence is NAD-dependent malic enzyme (565 aa).

The Proton donor role is filled by Tyr104. Arg157 contacts NAD(+). The active-site Proton acceptor is Lys175. Residues Glu246, Asp247, and Asp270 each coordinate a divalent metal cation. NAD(+) is bound by residues Asp270 and Asn418.

Belongs to the malic enzymes family. Homotetramer. Mg(2+) serves as cofactor. Requires Mn(2+) as cofactor.

The enzyme catalyses (S)-malate + NAD(+) = pyruvate + CO2 + NADH. It carries out the reaction oxaloacetate + H(+) = pyruvate + CO2. The sequence is that of NAD-dependent malic enzyme from Shigella boydii serotype 18 (strain CDC 3083-94 / BS512).